The primary structure comprises 201 residues: Protein GrpE (201 aa).

Polar residues predominate over residues 1 to 11; the sequence is MTDSTNNQGTS. The disordered stretch occupies residues 1 to 40; the sequence is MTDSTNNQGTSGRPDDDHTTEEVASVFNDPGAQAPAGEPD.

It belongs to the GrpE family. As to quaternary structure, homodimer.

The protein resides in the cytoplasm. Its function is as follows. Participates actively in the response to hyperosmotic and heat shock by preventing the aggregation of stress-denatured proteins, in association with DnaK and GrpE. It is the nucleotide exchange factor for DnaK and may function as a thermosensor. Unfolded proteins bind initially to DnaJ; upon interaction with the DnaJ-bound protein, DnaK hydrolyzes its bound ATP, resulting in the formation of a stable complex. GrpE releases ADP from DnaK; ATP binding to DnaK triggers the release of the substrate protein, thus completing the reaction cycle. Several rounds of ATP-dependent interactions between DnaJ, DnaK and GrpE are required for fully efficient folding. This is Protein GrpE from Beijerinckia indica subsp. indica (strain ATCC 9039 / DSM 1715 / NCIMB 8712).